Here is a 651-residue protein sequence, read N- to C-terminus: Acetyl-coenzyme A synthetase (651 aa).

CoA contacts are provided by residues 189-192 (RGGK), T311, and N335. ATP-binding positions include 387 to 389 (GEP), 411 to 416 (DTWWQT), D500, and R515. S523 lines the CoA pocket. An ATP-binding site is contributed by R526. 3 residues coordinate Mg(2+): V537, H539, and V542. Residue R584 coordinates CoA. The residue at position 609 (K609) is an N6-acetyllysine.

It belongs to the ATP-dependent AMP-binding enzyme family. Requires Mg(2+) as cofactor. In terms of processing, acetylated. Deacetylation by the SIR2-homolog deacetylase activates the enzyme.

It catalyses the reaction acetate + ATP + CoA = acetyl-CoA + AMP + diphosphate. Functionally, catalyzes the conversion of acetate into acetyl-CoA (AcCoA), an essential intermediate at the junction of anabolic and catabolic pathways. AcsA undergoes a two-step reaction. In the first half reaction, AcsA combines acetate with ATP to form acetyl-adenylate (AcAMP) intermediate. In the second half reaction, it can then transfer the acetyl group from AcAMP to the sulfhydryl group of CoA, forming the product AcCoA. The protein is Acetyl-coenzyme A synthetase of Allorhizobium ampelinum (strain ATCC BAA-846 / DSM 112012 / S4) (Agrobacterium vitis (strain S4)).